The chain runs to 108 residues: Replication initiation control protein YabA (108 aa).

Positions 83, 85, 99, and 102 each coordinate Zn(2+).

Belongs to the YabA family. Homotetramer. Interacts with both DnaA and DnaN, acting as a bridge between these two proteins. Zn(2+) is required as a cofactor.

Its subcellular location is the cytoplasm. It localises to the nucleoid. Functionally, involved in control of chromosome replication initiation. Inhibits the cooperative binding of DnaA to the oriC region, thus negatively regulating initiation of chromosome replication. Inhibits the ability of DnaA-ATP to form a helix on DNA; does not disassemble preformed DnaA-DNA helices. Decreases the residence time of DnaA on the chromosome at its binding sites (oriC, replication forks and promoter-binding sites). Tethers DnaA to the replication machinery via the DNA polymerase beta sliding clamp subunit (dnaN). Associates with oriC and other DnaA targets on the chromosome in a DnaA-dependent manner. The polypeptide is Replication initiation control protein YabA (Lactococcus lactis subsp. lactis (strain IL1403) (Streptococcus lactis)).